A 300-amino-acid chain; its full sequence is GTPase Era (300 aa).

Residues 4–173 form the Era-type G domain; sequence KYGIVAIVGK…INTIKNYLHK (170 aa). Residues 12-19 are G1; it reads GKPNVGKS. GTP is bound at residue 12–19; the sequence is GKPNVGKS. The segment at 38–42 is G2; it reads QTTRN. A G3 region spans residues 59–62; it reads DTPG. Residues 59 to 63 and 122 to 125 contribute to the GTP site; these read DTPGF and SKAE. Residues 122–125 are G4; sequence SKAE. Residues 152 to 154 are G5; sequence ISA. The region spanning 204–282 is the KH type-2 domain; it reads LNHEVPHGVG…SLTIFVKVEN (79 aa).

This sequence belongs to the TRAFAC class TrmE-Era-EngA-EngB-Septin-like GTPase superfamily. Era GTPase family. In terms of assembly, monomer.

The protein resides in the cytoplasm. The protein localises to the cell membrane. Its function is as follows. An essential GTPase that binds both GDP and GTP, with rapid nucleotide exchange. Plays a role in 16S rRNA processing and 30S ribosomal subunit biogenesis and possibly also in cell cycle regulation and energy metabolism. The protein is GTPase Era of Ureaplasma parvum serovar 3 (strain ATCC 27815 / 27 / NCTC 11736).